A 64-amino-acid chain; its full sequence is Conotoxin Vc1.3 (64 aa).

An N-terminal signal peptide occupies residues 1–21 (MGMRMMFTVFLLVVLATTVVS). Positions 22–43 (FTSDRASDGRKAAASDLITLTI) are excised as a propeptide. Intrachain disulfides connect Cys-46–Cys-52 and Cys-47–Cys-60. Residue Cys-60 is modified to Cysteine amide.

It belongs to the conotoxin A superfamily. In terms of tissue distribution, expressed by the venom duct.

The protein resides in the secreted. May act as a toxin. The sequence is that of Conotoxin Vc1.3 from Conus victoriae (Queen Victoria cone).